The following is a 249-amino-acid chain: DNA polymerase sliding clamp 1 (249 aa).

Belongs to the PCNA family. Homotrimer. The subunits circularize to form a toroid; DNA passes through its center. Replication factor C (RFC) is required to load the toroid on the DNA. Interacts with TIP.

Its activity is regulated as follows. Inhibited by interaction with the PCNA inhibitor TIP. Its function is as follows. Sliding clamp subunit that acts as a moving platform for DNA processing. Responsible for tethering the catalytic subunit of DNA polymerase and other proteins to DNA during high-speed replication. The polypeptide is DNA polymerase sliding clamp 1 (Thermococcus kodakarensis (strain ATCC BAA-918 / JCM 12380 / KOD1) (Pyrococcus kodakaraensis (strain KOD1))).